Here is a 305-residue protein sequence, read N- to C-terminus: DNA-directed RNA polymerase 35 kDa subunit (305 aa).

The protein belongs to the poxviridae DNA-directed RNA polymerase 35 kDa subunit family. In terms of assembly, the DNA-dependent RNA polymerase used for intermediate and late genes expression consists of eight subunits 147 kDa, 133 kDa, 35 kDa, 30 kDa, 22 kDa, 19 kDa, 18 kDa and 7 kDa totalling more than 500 kDa in mass. The same holoenzyme, with the addition of the transcription-specificity factor RAP94, is used for early gene expression.

It is found in the virion. The enzyme catalyses RNA(n) + a ribonucleoside 5'-triphosphate = RNA(n+1) + diphosphate. Its function is as follows. Part of the DNA-dependent RNA polymerase which catalyzes the transcription of viral DNA into RNA using the four ribonucleoside triphosphates as substrates. Responsible for the transcription of early, intermediate and late genes. DNA-dependent RNA polymerase associates with the early transcription factor (ETF) thereby allowing the early genes transcription. Late transcription, and probably also intermediate transcription, require newly synthesized RNA polymerase. The chain is DNA-directed RNA polymerase 35 kDa subunit (RPO35) from Rabbitpox virus (strain Utrecht) (RPV).